The following is a 474-amino-acid chain: Glycogen synthase (474 aa).

K12 lines the ADP-alpha-D-glucose pocket.

It belongs to the glycosyltransferase 1 family. Bacterial/plant glycogen synthase subfamily.

The enzyme catalyses [(1-&gt;4)-alpha-D-glucosyl](n) + ADP-alpha-D-glucose = [(1-&gt;4)-alpha-D-glucosyl](n+1) + ADP + H(+). It functions in the pathway glycan biosynthesis; glycogen biosynthesis. Functionally, synthesizes alpha-1,4-glucan chains using ADP-glucose. This is Glycogen synthase from Xanthomonas axonopodis pv. citri (strain 306).